The primary structure comprises 425 residues: Serine--tRNA ligase (425 aa).

230–232 (TAE) lines the L-serine pocket. 261–263 (RSE) lines the ATP pocket. E284 lines the L-serine pocket. 348–351 (EISS) lines the ATP pocket. L-serine is bound at residue S384.

The protein belongs to the class-II aminoacyl-tRNA synthetase family. Type-1 seryl-tRNA synthetase subfamily. Homodimer. The tRNA molecule binds across the dimer.

The protein localises to the cytoplasm. The catalysed reaction is tRNA(Ser) + L-serine + ATP = L-seryl-tRNA(Ser) + AMP + diphosphate + H(+). It catalyses the reaction tRNA(Sec) + L-serine + ATP = L-seryl-tRNA(Sec) + AMP + diphosphate + H(+). Its pathway is aminoacyl-tRNA biosynthesis; selenocysteinyl-tRNA(Sec) biosynthesis; L-seryl-tRNA(Sec) from L-serine and tRNA(Sec): step 1/1. Its function is as follows. Catalyzes the attachment of serine to tRNA(Ser). Is also able to aminoacylate tRNA(Sec) with serine, to form the misacylated tRNA L-seryl-tRNA(Sec), which will be further converted into selenocysteinyl-tRNA(Sec). This chain is Serine--tRNA ligase, found in Streptococcus gordonii (strain Challis / ATCC 35105 / BCRC 15272 / CH1 / DL1 / V288).